The chain runs to 392 residues: Phosphoglycerate kinase (392 aa).

Substrate contacts are provided by residues 19 to 21 (DFN), Arg35, 58 to 61 (HMGR), Arg117, and Arg150. Residues Lys201, Glu323, and 349–352 (GGDS) contribute to the ATP site.

It belongs to the phosphoglycerate kinase family. Monomer.

It localises to the cytoplasm. The enzyme catalyses (2R)-3-phosphoglycerate + ATP = (2R)-3-phospho-glyceroyl phosphate + ADP. Its pathway is carbohydrate degradation; glycolysis; pyruvate from D-glyceraldehyde 3-phosphate: step 2/5. This is Phosphoglycerate kinase from Desulfotalea psychrophila (strain LSv54 / DSM 12343).